Reading from the N-terminus, the 148-residue chain is 3-dehydroquinate dehydratase (148 aa).

The active-site Proton acceptor is Tyr-26. Asn-77, His-83, and Asp-90 together coordinate substrate. Residue His-103 is the Proton donor of the active site. Substrate is bound by residues 104–105 (LS) and Arg-114.

This sequence belongs to the type-II 3-dehydroquinase family. Homododecamer.

The enzyme catalyses 3-dehydroquinate = 3-dehydroshikimate + H2O. It participates in metabolic intermediate biosynthesis; chorismate biosynthesis; chorismate from D-erythrose 4-phosphate and phosphoenolpyruvate: step 3/7. In terms of biological role, catalyzes a trans-dehydration via an enolate intermediate. The sequence is that of 3-dehydroquinate dehydratase (aroQ) from Pasteurella multocida (strain Pm70).